The chain runs to 455 residues: UDP-N-acetylmuramoylalanine--D-glutamate ligase (455 aa).

119 to 125 (GTNGKTT) provides a ligand contact to ATP.

This sequence belongs to the MurCDEF family.

It localises to the cytoplasm. The enzyme catalyses UDP-N-acetyl-alpha-D-muramoyl-L-alanine + D-glutamate + ATP = UDP-N-acetyl-alpha-D-muramoyl-L-alanyl-D-glutamate + ADP + phosphate + H(+). It functions in the pathway cell wall biogenesis; peptidoglycan biosynthesis. In terms of biological role, cell wall formation. Catalyzes the addition of glutamate to the nucleotide precursor UDP-N-acetylmuramoyl-L-alanine (UMA). This chain is UDP-N-acetylmuramoylalanine--D-glutamate ligase, found in Listeria monocytogenes serotype 4b (strain F2365).